The sequence spans 197 residues: Small ribosomal subunit protein uS5 (197 aa).

A compositionally biased stretch (basic and acidic residues) spans 1-17; sequence MAERENRGRGRGRNREE. Disordered stretches follow at residues 1–22 and 158–197; these read MAER…TPEF and NESS…SEEA. The region spanning 22 to 85 is the S5 DRBM domain; sequence FADRLVAINR…EQAKRQLIRV (64 aa). Over residues 172 to 186 the composition is skewed to basic and acidic residues; that stretch reads KVADILPKRDDHPQI.

Belongs to the universal ribosomal protein uS5 family. Part of the 30S ribosomal subunit. Contacts proteins S4 and S8.

With S4 and S12 plays an important role in translational accuracy. Its function is as follows. Located at the back of the 30S subunit body where it stabilizes the conformation of the head with respect to the body. This is Small ribosomal subunit protein uS5 from Jannaschia sp. (strain CCS1).